A 155-amino-acid polypeptide reads, in one-letter code: MYKIQLLSCIALTLALVANGAPTSSSTGNTMKEVKSLLLDLQLLLEKVKNPENLKHSRMHTFNFYVPKVNATELKHLKCLLEELKLLEEVLNLAPSKNLNPREIKDSMDNIKRIVLELQGSETRFTCEYDDVTVKAVEFLNKWITFCQSIYSTMT.

Residues M1 to G20 form the signal peptide. T23 is a glycosylation site (O-linked (GalNAc...) threonine). C79 and C127 are oxidised to a cystine.

Belongs to the IL-2 family.

It is found in the secreted. Cytokine produced by activated CD4-positive helper T-cells and to a lesser extend activated CD8-positive T-cells and natural killer (NK) cells that plays pivotal roles in the immune response and tolerance. Binds to a receptor complex composed of either the high-affinity trimeric IL-2R (IL2RA/CD25, IL2RB/CD122 and IL2RG/CD132) or the low-affinity dimeric IL-2R (IL2RB and IL2RG). Interaction with the receptor leads to oligomerization and conformation changes in the IL-2R subunits resulting in downstream signaling starting with phosphorylation of JAK1 and JAK3. In turn, JAK1 and JAK3 phosphorylate the receptor to form a docking site leading to the phosphorylation of several substrates including STAT5. This process leads to activation of several pathways including STAT, phosphoinositide-3-kinase/PI3K and mitogen-activated protein kinase/MAPK pathways. Functions as a T-cell growth factor and can increase NK-cell cytolytic activity as well. Promotes strong proliferation of activated B-cells and subsequently immunoglobulin production. Plays a pivotal role in regulating the adaptive immune system by controlling the survival and proliferation of regulatory T-cells, which are required for the maintenance of immune tolerance. Moreover, participates in the differentiation and homeostasis of effector T-cell subsets, including Th1, Th2, Th17 as well as memory CD8-positive T-cells. The chain is Interleukin-2 (IL2) from Boselaphus tragocamelus (Nilgai).